A 374-amino-acid polypeptide reads, in one-letter code: Tetraacyldisaccharide 4'-kinase (374 aa).

66–73 (TAGGTGKT) lines the ATP pocket.

Belongs to the LpxK family.

It catalyses the reaction a lipid A disaccharide + ATP = a lipid IVA + ADP + H(+). The protein operates within glycolipid biosynthesis; lipid IV(A) biosynthesis; lipid IV(A) from (3R)-3-hydroxytetradecanoyl-[acyl-carrier-protein] and UDP-N-acetyl-alpha-D-glucosamine: step 6/6. Transfers the gamma-phosphate of ATP to the 4'-position of a tetraacyldisaccharide 1-phosphate intermediate (termed DS-1-P) to form tetraacyldisaccharide 1,4'-bis-phosphate (lipid IVA). The chain is Tetraacyldisaccharide 4'-kinase from Syntrophus aciditrophicus (strain SB).